The primary structure comprises 147 residues: Plasminogen receptor (KT) (147 aa).

At 1–52 (MGFIFSKSMNESMKNQKEFMLMNARLQLERQLIMQSEMRERQMAMQIAWSRE) the chain is on the extracellular side. A helical transmembrane segment spans residues 53 to 73 (FLKYFGTFFGLAAISLTAGAI). The Cytoplasmic portion of the chain corresponds to 74–78 (KKKKP). The chain crosses the membrane as a helical span at residues 79-99 (AFLVPIVPLSFILTYQYDLGY). Over 100-147 (GTLLERMKGEAEDILETEKSKLQLPRGMITFESIEKARKEQSRFFIDK) the chain is Extracellular.

In terms of assembly, interacts with PLAT and PLAUR. Expressed in peripheral blood cells and monocytes. Expressed in adrenal medulla.

The protein localises to the cell membrane. In terms of biological role, receptor for plasminogen. Regulates urokinase plasminogen activator-dependent and stimulates tissue-type plasminogen activator-dependent cell surface plasminogen activation. Proposed to be part of a local catecholaminergic cell plasminogen activation system that regulates neuroendocrine prohormone processing. Involved in regulation of inflammatory response; regulates monocyte chemotactic migration and matrix metalloproteinase activation, such as of MMP2 and MMP9. The protein is Plasminogen receptor (KT) (PLGRKT) of Homo sapiens (Human).